Here is a 244-residue protein sequence, read N- to C-terminus: Cytochrome c1 (244 aa).

A signal peptide spans methionine 1–alanine 19. The heme c site is built by cysteine 50, cysteine 53, and histidine 54. The chain crosses the membrane as a helical span at residues tyrosine 220–tryptophan 240.

In terms of assembly, the main subunits of complex b-c1 are: cytochrome b, cytochrome c1 and the Rieske protein. Post-translationally, binds 1 heme c group covalently per subunit.

The protein localises to the cell membrane. Functionally, component of the ubiquinol-cytochrome c reductase complex (complex III or cytochrome b-c1 complex), which is a respiratory chain that generates an electrochemical potential coupled to ATP synthesis. c1 functions as an electron donor to cytochrome c. The chain is Cytochrome c1 (petC) from Allochromatium vinosum (strain ATCC 17899 / DSM 180 / NBRC 103801 / NCIMB 10441 / D) (Chromatium vinosum).